The sequence spans 87 residues: U15-lycotoxin-Ls1f (87 aa).

Positions 1–20 (MNSKIFAVLLLLAFLSCVLS) are cleaved as a signal peptide. The 46-residue stretch at 21–66 (DQYCPKSSITACKKMNIRNDCCKDDDCTGGSWCCATPCGNFCKYPT) folds into the WAP domain. Disulfide bonds link C24-C54, C32-C58, C41-C53, C42-C80, and C47-C62.

It belongs to the venom protein 11 family. 01 (wap-1) subfamily. Post-translationally, contains 5 disulfide bonds. In terms of tissue distribution, expressed by the venom gland.

The protein resides in the secreted. Its function is as follows. Has antibacterial activity. The sequence is that of U15-lycotoxin-Ls1f from Lycosa singoriensis (Wolf spider).